Here is a 503-residue protein sequence, read N- to C-terminus: uncharacterized protein (503 aa).

Belongs to the Mg-chelatase subunits D/I family. ComM subfamily.

This is an uncharacterized protein from Mycobacterium bovis (strain ATCC BAA-935 / AF2122/97).